Reading from the N-terminus, the 212-residue chain is External core antigen (212 aa).

An N-terminal signal peptide occupies residues 1 to 19; sequence MQLFHLCLIISCSCPTVQA. Positions 25–27 are HBEAG; sequence GWL. The disordered stretch occupies residues 179–212; sequence RQRGRTIRRRTPSPRRRRSQSPRRRRSQSRESQC. Over residues 180–205 the composition is skewed to basic residues; sequence QRGRTIRRRTPSPRRRRSQSPRRRRS. The 1; half-length repeat unit spans residues 184 to 190; it reads TIRRRTP. Residues 184–206 form a 3 X 8 AA repeats of S-P-R-R-R-R-S-Q region; the sequence is TIRRRTPSPRRRRSQSPRRRRSQ. Residues 184 to 212 constitute a propeptide that is removed on maturation; that stretch reads TIRRRTPSPRRRRSQSPRRRRSQSRESQC. 2 consecutive repeat copies span residues 191 to 198 and 199 to 206.

This sequence belongs to the orthohepadnavirus precore antigen family. In terms of assembly, homodimerizes. In terms of processing, phosphorylated. Cleaved by host furin.

The protein localises to the secreted. It localises to the host nucleus. May regulate immune response to the intracellular capsid in acting as a T-cell tolerogen, by having an immunoregulatory effect which prevents destruction of infected cells by cytotoxic T-cells. This immune regulation may predispose to chronicity during perinatal infections and prevent severe liver injury during adult infections. This is External core antigen from Hepatitis B virus genotype D subtype ayw (isolate Australia/AustKW/1991) (HBV-D).